The following is a 180-amino-acid chain: UPF0340 protein RBAM_034070 (180 aa).

Belongs to the UPF0340 family.

The chain is UPF0340 protein RBAM_034070 from Bacillus velezensis (strain DSM 23117 / BGSC 10A6 / LMG 26770 / FZB42) (Bacillus amyloliquefaciens subsp. plantarum).